Reading from the N-terminus, the 246-residue chain is tRNA pseudouridine synthase A (246 aa).

The Nucleophile role is filled by aspartate 53. Tyrosine 111 serves as a coordination point for substrate.

It belongs to the tRNA pseudouridine synthase TruA family. In terms of assembly, homodimer.

The enzyme catalyses uridine(38/39/40) in tRNA = pseudouridine(38/39/40) in tRNA. Formation of pseudouridine at positions 38, 39 and 40 in the anticodon stem and loop of transfer RNAs. This chain is tRNA pseudouridine synthase A, found in Lysinibacillus sphaericus (strain C3-41).